The chain runs to 208 residues: MELKVLNIQGAETGEVVTLNDEIFAVEVSEHAMYLDVKAILANRRQGTHKAKTRAEVRGGGKKPFRQKGTGNARQGSTRSGLMVGGGAIFGPQPRTYDQKVNRKVKQLARRSALSAKAAAGQIVVVDDFSFEAIKTRPVADMLKNLGLAEKKTLLMMPHHDNVVSTSGRNIEKLNVMVADQASTYDILNSQVVLFQKGALQKIEETLG.

The tract at residues 49 to 78 (HKAKTRAEVRGGGKKPFRQKGTGNARQGST) is disordered. Over residues 69-78 (GTGNARQGST) the composition is skewed to polar residues.

This sequence belongs to the universal ribosomal protein uL4 family. In terms of assembly, part of the 50S ribosomal subunit.

Functionally, one of the primary rRNA binding proteins, this protein initially binds near the 5'-end of the 23S rRNA. It is important during the early stages of 50S assembly. It makes multiple contacts with different domains of the 23S rRNA in the assembled 50S subunit and ribosome. Its function is as follows. Forms part of the polypeptide exit tunnel. The protein is Large ribosomal subunit protein uL4 of Chlorobaculum tepidum (strain ATCC 49652 / DSM 12025 / NBRC 103806 / TLS) (Chlorobium tepidum).